Reading from the N-terminus, the 220-residue chain is Coat protein TP4 (220 aa).

It is found in the virion. This Thermoproteus tenax (TTV1) protein is Coat protein TP4.